Consider the following 334-residue polypeptide: GTPase Obg (334 aa).

The region spanning 1–159 (MKFIDQAIIH…RDIQLELMLL (159 aa)) is the Obg domain. The interval 67–86 (AQNGQNGSSRKSSGKKGDDI) is disordered. Residues 68–77 (QNGQNGSSRK) are compositionally biased toward low complexity. In terms of domain architecture, OBG-type G spans 160–333 (ADVGTLGMPN…LCSDITKYLK (174 aa)). Residues 166–173 (GMPNVGKS), 191–195 (FTTLH), 213–216 (DIPG), 283–286 (NKID), and 314–316 (SSM) each bind GTP. Positions 173 and 193 each coordinate Mg(2+).

The protein belongs to the TRAFAC class OBG-HflX-like GTPase superfamily. OBG GTPase family. As to quaternary structure, monomer. Mg(2+) serves as cofactor.

The protein resides in the cytoplasm. Functionally, an essential GTPase which binds GTP, GDP and possibly (p)ppGpp with moderate affinity, with high nucleotide exchange rates and a fairly low GTP hydrolysis rate. Plays a role in control of the cell cycle, stress response, ribosome biogenesis and in those bacteria that undergo differentiation, in morphogenesis control. This Buchnera aphidicola subsp. Acyrthosiphon pisum (strain 5A) protein is GTPase Obg.